We begin with the raw amino-acid sequence, 360 residues long: Phospho-N-acetylmuramoyl-pentapeptide-transferase (360 aa).

Transmembrane regions (helical) follow at residues 27–47, 71–91, 93–113, 128–148, 168–188, 199–219, 239–259, 262–282, 288–308, and 337–357; these read GAMI…INSL, TPTM…LLWA, LASV…AIGF, FSGK…AFVI, FVVN…VGAG, GLAI…AYLS, LAVV…FNAP, AIFM…TVAV, IVLA…IIQV, and QVVI…LSTL.

The protein belongs to the glycosyltransferase 4 family. MraY subfamily. The cofactor is Mg(2+).

It localises to the cell inner membrane. It catalyses the reaction UDP-N-acetyl-alpha-D-muramoyl-L-alanyl-gamma-D-glutamyl-meso-2,6-diaminopimeloyl-D-alanyl-D-alanine + di-trans,octa-cis-undecaprenyl phosphate = di-trans,octa-cis-undecaprenyl diphospho-N-acetyl-alpha-D-muramoyl-L-alanyl-D-glutamyl-meso-2,6-diaminopimeloyl-D-alanyl-D-alanine + UMP. Its pathway is cell wall biogenesis; peptidoglycan biosynthesis. Its function is as follows. Catalyzes the initial step of the lipid cycle reactions in the biosynthesis of the cell wall peptidoglycan: transfers peptidoglycan precursor phospho-MurNAc-pentapeptide from UDP-MurNAc-pentapeptide onto the lipid carrier undecaprenyl phosphate, yielding undecaprenyl-pyrophosphoryl-MurNAc-pentapeptide, known as lipid I. This Brucella anthropi (strain ATCC 49188 / DSM 6882 / CCUG 24695 / JCM 21032 / LMG 3331 / NBRC 15819 / NCTC 12168 / Alc 37) (Ochrobactrum anthropi) protein is Phospho-N-acetylmuramoyl-pentapeptide-transferase.